A 119-amino-acid polypeptide reads, in one-letter code: Large ribosomal subunit protein uL14 (119 aa).

The protein belongs to the universal ribosomal protein uL14 family. As to quaternary structure, part of the 50S ribosomal subunit. Forms a cluster with proteins L3 and L19. In the 70S ribosome, L14 and L19 interact and together make contacts with the 16S rRNA in bridges B5 and B8.

Functionally, binds to 23S rRNA. Forms part of two intersubunit bridges in the 70S ribosome. The polypeptide is Large ribosomal subunit protein uL14 (Anaplasma marginale (strain St. Maries)).